Consider the following 122-residue polypeptide: Large ribosomal subunit protein uL14 (122 aa).

Belongs to the universal ribosomal protein uL14 family. Part of the 50S ribosomal subunit. Forms a cluster with proteins L3 and L19. In the 70S ribosome, L14 and L19 interact and together make contacts with the 16S rRNA in bridges B5 and B8.

Its function is as follows. Binds to 23S rRNA. Forms part of two intersubunit bridges in the 70S ribosome. The chain is Large ribosomal subunit protein uL14 from Lawsonia intracellularis (strain PHE/MN1-00).